We begin with the raw amino-acid sequence, 264 residues long: Thymidylate synthase (264 aa).

Arg-21 serves as a coordination point for dUMP. Residue His-51 participates in (6R)-5,10-methylene-5,6,7,8-tetrahydrofolate binding. 126–127 (RR) serves as a coordination point for dUMP. The Nucleophile role is filled by Cys-146. DUMP-binding positions include 166–169 (RSCD), Asn-177, and 207–209 (HLY). Residue Asp-169 coordinates (6R)-5,10-methylene-5,6,7,8-tetrahydrofolate. A (6R)-5,10-methylene-5,6,7,8-tetrahydrofolate-binding site is contributed by Ala-263.

It belongs to the thymidylate synthase family. Bacterial-type ThyA subfamily. Homodimer.

It is found in the cytoplasm. The enzyme catalyses dUMP + (6R)-5,10-methylene-5,6,7,8-tetrahydrofolate = 7,8-dihydrofolate + dTMP. It functions in the pathway pyrimidine metabolism; dTTP biosynthesis. In terms of biological role, catalyzes the reductive methylation of 2'-deoxyuridine-5'-monophosphate (dUMP) to 2'-deoxythymidine-5'-monophosphate (dTMP) while utilizing 5,10-methylenetetrahydrofolate (mTHF) as the methyl donor and reductant in the reaction, yielding dihydrofolate (DHF) as a by-product. This enzymatic reaction provides an intracellular de novo source of dTMP, an essential precursor for DNA biosynthesis. The polypeptide is Thymidylate synthase (Yersinia pseudotuberculosis serotype O:1b (strain IP 31758)).